Consider the following 1253-residue polypeptide: Cytoplasmic FMR1-interacting protein 1 (1253 aa).

Serine 583 carries the post-translational modification Phosphoserine. Residues aspartate 724–lysine 732 form an EIF4E-binding region. Position 1234 is a phosphothreonine (threonine 1234).

The protein belongs to the CYFIP family. As to quaternary structure, component of the WAVE1 complex composed of ABI2, CYFIP1 or CYFIP2, BRK1, NCKAP1 and WASF1/WAVE1. Within the complex, a heterodimer containing NCKAP1 and CYFIP1 interacts with a heterotrimer formed by WAVE1, ABI2 and BRK1. Component of the CYFIP1-EIF4E-FMR1 complex which is composed of CYFIP, EIF4E and FMR1. Interacts with FMR1 but does not bind to related proteins FXR1 or FXR2. Interaction with EIF4E stimulates FMR1 binding. Component of the WAVE2 complex composed of ABI1, CYFIP1/SRA1, NCKAP1/NAP1 (NCKAP1L/HEM1 in hematopoietic cells) and WASF2/WAVE2. Interacts with the active GTP-bound form of RAC1. Interacts through its C-terminus with the C-terminus of DPYSL2/CRMP2 which is necessary for DPYSL2-induced axon outgrowth. Interacts with NYAP1, NYAP2 and MYO16. Interacts with TMEM108 (via N-terminus); the interaction associates TMEM108 with the WAVE1 complex. Highly expressed in embryonic and adult developing nervous system.

It localises to the cytoplasm. The protein localises to the perinuclear region. It is found in the cell projection. The protein resides in the lamellipodium. Its subcellular location is the ruffle. It localises to the synapse. The protein localises to the synaptosome. Its function is as follows. Component of the CYFIP1-EIF4E-FMR1 complex which binds to the mRNA cap and mediates translational repression. In the CYFIP1-EIF4E-FMR1 complex this subunit is an adapter between EIF4E and FMR1. Promotes the translation repression activity of FMR1 in brain probably by mediating its association with EIF4E and mRNA. Regulates formation of membrane ruffles and lamellipodia. Plays a role in axon outgrowth. Binds to F-actin but not to RNA. Part of the WAVE complex that regulates actin filament reorganization via its interaction with the Arp2/3 complex. Actin remodeling activity is regulated by RAC1. Regulator of epithelial morphogenesis. May act as an invasion suppressor in cancers. As component of the WAVE1 complex, required for BDNF-NTRK2 endocytic trafficking and signaling from early endosomes. The sequence is that of Cytoplasmic FMR1-interacting protein 1 from Mus musculus (Mouse).